The sequence spans 111 residues: MIQVLLVTICLAVFPYQGSSIILESGNVNDYEVVYPRKITPLPKGAVQPKNPCCDAATCKLTPGAQCAEGLCCDQCKFIKAGKICRRARGDNPDYRCTGQSGDCPRKHFYA.

The signal sequence occupies residues 1–20 (MIQVLLVTICLAVFPYQGSS). Positions 21–44 (IILESGNVNDYEVVYPRKITPLPK) are excised as a propeptide. In terms of domain architecture, Disintegrin spans 45–111 (GAVQPKNPCC…GDCPRKHFYA (67 aa)). Cystine bridges form between Cys-53-Cys-76, Cys-67-Cys-73, Cys-72-Cys-97, and Cys-85-Cys-104. Positions 89–91 (RGD) match the Cell attachment site motif. A propeptide spanning residues 110–111 (YA) is cleaved from the precursor.

This sequence belongs to the disintegrin family. Dimeric disintegrin subfamily. In terms of assembly, heterodimer with subunit beta; disulfide-linked. In terms of tissue distribution, expressed by the venom gland.

The protein resides in the secreted. Its function is as follows. Acts by binding to alpha-IIb/beta-3 (ITGA2B/ITGB3) on the platelet surface and inhibits both ADP-induced platelet aggregation and platelet aggregate dissociation in human platelet-rich plasma. This chain is Disintegrin subunit alpha, found in Agkistrodon piscivorus leucostoma (Western cottonmouth).